Reading from the N-terminus, the 275-residue chain is Lectin (275 aa).

The first 30 residues, 1-30 (MASLQTQMISFYLIFLSILLTTIFFFKVNS), serve as a signal peptide directing secretion. D-glucose-binding residues include D111 and G129. The Mn(2+) site is built by E149 and D151. Ca(2+) is bound by residues D151, F153, N155, and D159. Mn(2+) contacts are provided by D159 and H166. Residues 211 to 217 (NSLEEEN) constitute a propeptide that is removed on maturation. D-glucose is bound by residues G246 and A247. Positions 270-275 (KQAADA) are excised as a propeptide.

Belongs to the leguminous lectin family. As to quaternary structure, heterotetramer of two alpha and two beta chains. Post-translationally, the mature form consists of two chains, alpha and beta, produced by cleavage of the immature protein. These remain cleaved, yet fold together to form one subunit.

In terms of biological role, D-mannose specific lectin. The protein is Lectin of Lens culinaris subsp. orientalis (Oriental wild lentil).